A 116-amino-acid chain; its full sequence is Large ribosomal subunit protein uL18 (116 aa).

This sequence belongs to the universal ribosomal protein uL18 family. In terms of assembly, part of the 50S ribosomal subunit; part of the 5S rRNA/L5/L18/L25 subcomplex. Contacts the 5S and 23S rRNAs.

In terms of biological role, this is one of the proteins that bind and probably mediate the attachment of the 5S RNA into the large ribosomal subunit, where it forms part of the central protuberance. The polypeptide is Large ribosomal subunit protein uL18 (Shewanella woodyi (strain ATCC 51908 / MS32)).